Reading from the N-terminus, the 551-residue chain is Glucose-6-phosphate isomerase 2 (551 aa).

Residue E353 is the Proton donor of the active site. Residues H384 and K512 contribute to the active site.

Belongs to the GPI family.

The protein localises to the cytoplasm. It catalyses the reaction alpha-D-glucose 6-phosphate = beta-D-fructose 6-phosphate. The protein operates within carbohydrate biosynthesis; gluconeogenesis. Its pathway is carbohydrate degradation; glycolysis; D-glyceraldehyde 3-phosphate and glycerone phosphate from D-glucose: step 2/4. Its function is as follows. Catalyzes the reversible isomerization of glucose-6-phosphate to fructose-6-phosphate. This is Glucose-6-phosphate isomerase 2 from Colwellia psychrerythraea (strain 34H / ATCC BAA-681) (Vibrio psychroerythus).